A 63-amino-acid chain; its full sequence is Large ribosomal subunit protein bL35 (63 aa).

It belongs to the bacterial ribosomal protein bL35 family.

This is Large ribosomal subunit protein bL35 from Sulfurovum sp. (strain NBC37-1).